The chain runs to 557 residues: Dihydroxy-acid dehydratase (557 aa).

Cys47 contacts [2Fe-2S] cluster. Asp79 serves as a coordination point for Mg(2+). Position 120 (Cys120) interacts with [2Fe-2S] cluster. Positions 121 and 122 each coordinate Mg(2+). Lys122 carries the N6-carboxylysine modification. Cys192 is a [2Fe-2S] cluster binding site. Glu444 is a binding site for Mg(2+). The active-site Proton acceptor is Ser470.

Belongs to the IlvD/Edd family. In terms of assembly, homodimer. [2Fe-2S] cluster serves as cofactor. Requires Mg(2+) as cofactor.

The enzyme catalyses (2R)-2,3-dihydroxy-3-methylbutanoate = 3-methyl-2-oxobutanoate + H2O. It catalyses the reaction (2R,3R)-2,3-dihydroxy-3-methylpentanoate = (S)-3-methyl-2-oxopentanoate + H2O. Its pathway is amino-acid biosynthesis; L-isoleucine biosynthesis; L-isoleucine from 2-oxobutanoate: step 3/4. It participates in amino-acid biosynthesis; L-valine biosynthesis; L-valine from pyruvate: step 3/4. Its function is as follows. Functions in the biosynthesis of branched-chain amino acids. Catalyzes the dehydration of (2R,3R)-2,3-dihydroxy-3-methylpentanoate (2,3-dihydroxy-3-methylvalerate) into 2-oxo-3-methylpentanoate (2-oxo-3-methylvalerate) and of (2R)-2,3-dihydroxy-3-methylbutanoate (2,3-dihydroxyisovalerate) into 2-oxo-3-methylbutanoate (2-oxoisovalerate), the penultimate precursor to L-isoleucine and L-valine, respectively. The protein is Dihydroxy-acid dehydratase of Synechococcus sp. (strain CC9605).